The sequence spans 549 residues: CTP synthase (549 aa).

An amidoligase domain region spans residues 1 to 272 (MPPKSTTTKH…DAYVVRKLDL (272 aa)). Serine 19 is a CTP binding site. Residue serine 19 coordinates UTP. ATP contacts are provided by residues 20–25 (SLGKGL) and aspartate 77. Mg(2+) is bound by residues aspartate 77 and glutamate 146. Residues 153–155 (DIE), 193–198 (KTKPTQ), and lysine 229 each bind CTP. UTP contacts are provided by residues 193-198 (KTKPTQ) and lysine 229. The Glutamine amidotransferase type-1 domain maps to 297–548 (NLALVGKYID…VKAAVERKTG (252 aa)). Glycine 360 is a binding site for L-glutamine. The active-site Nucleophile; for glutamine hydrolysis is the cysteine 387. L-glutamine is bound by residues 388 to 391 (LGLQ), glutamate 411, and arginine 473. Catalysis depends on residues histidine 521 and glutamate 523.

This sequence belongs to the CTP synthase family. In terms of assembly, homotetramer.

It carries out the reaction UTP + L-glutamine + ATP + H2O = CTP + L-glutamate + ADP + phosphate + 2 H(+). The enzyme catalyses L-glutamine + H2O = L-glutamate + NH4(+). It catalyses the reaction UTP + NH4(+) + ATP = CTP + ADP + phosphate + 2 H(+). It functions in the pathway pyrimidine metabolism; CTP biosynthesis via de novo pathway; CTP from UDP: step 2/2. With respect to regulation, allosterically activated by GTP, when glutamine is the substrate; GTP has no effect on the reaction when ammonia is the substrate. The allosteric effector GTP functions by stabilizing the protein conformation that binds the tetrahedral intermediate(s) formed during glutamine hydrolysis. Inhibited by the product CTP, via allosteric rather than competitive inhibition. Functionally, catalyzes the ATP-dependent amination of UTP to CTP with either L-glutamine or ammonia as the source of nitrogen. Regulates intracellular CTP levels through interactions with the four ribonucleotide triphosphates. This chain is CTP synthase, found in Streptomyces avermitilis (strain ATCC 31267 / DSM 46492 / JCM 5070 / NBRC 14893 / NCIMB 12804 / NRRL 8165 / MA-4680).